Consider the following 722-residue polypeptide: MLRPEQMSKVSVAGSTHVLTPVIEAVHDAELVHLSDYDGGIDGFDNGDPMTGADEAAEKLVTVRSLKSLLDVSEGDAGPTRIVTDDALDTELESIRVEATDLDDRRSELTDDLRAVIERIDAAEPFADLGIDLDLLSGYDSLQVAVGTGDQSAIDAALAASDRISAFETFTGQDTIGVFAYPAADDDAALDDALVGVPFTRLDVPDADGSPEQYVSELRERRDTIQAEIEDVDDELAAFRDEHAGFLLAAEERLAIDVQKSEAPLQFASTSHAFVAEGWLPTSEYDAFTDAIESAVGDHVLVEELERADYKPTGHDQHVPADDGADAATDGGTTASFDETDSPPVIQDNPGPVSSFESLTEVINRPQYTEIDPTVVLFLTFPAFYGFMIGDLGYGVLYALLGFWLSRSFDSEMISKLGGVAMWAGGFTALFGVLYGEVFGLHLVTEYLWHGALGLADAPLKKGLHVSAFAELWLAASLVFGIAHLAIGYVFGFVNESRSHGLKDAALESGGQLLLMAGVGVWLFSTHMQSGGGPRPELLYSVVALPPIVGKAGLAAAVVGLVLVTLGEGAAGFLESPTYALVNTVSYTRIAAVLLAKAGMAYVVNLLVFGAYETHLEHPETIDYMFGLFSTTIEHETHFMLFSGEAHGEVLFPGLMHMGAAGILIGVLVLLVGHALVLALGVTSAGLQALRLEYVEFFNKFYEGGGEKYNPFGYTRNYTTED.

Residues 309-321 (DYKPTGHDQHVPA) are compositionally biased toward basic and acidic residues. The segment at 309–352 (DYKPTGHDQHVPADDGADAATDGGTTASFDETDSPPVIQDNPGP) is disordered. The segment covering 326-335 (DAATDGGTTA) has biased composition (low complexity). The next 8 membrane-spanning stretches (helical) occupy residues 384–404 (FYGF…LGFW), 419–439 (GVAM…GEVF), 474–494 (LAAS…FGFV), 505–525 (AALE…WLFS), 554–574 (LAAA…AGFL), 590–610 (IAAV…LVFG), 639–659 (FMLF…MHMG), and 662–682 (GILI…ALGV).

The protein belongs to the V-ATPase 116 kDa subunit family. Has multiple subunits with at least A(3), B(3), C, D, E, F, H, I and proteolipid K(x).

It is found in the cell membrane. Functionally, component of the A-type ATP synthase that produces ATP from ADP in the presence of a proton gradient across the membrane. The protein is A-type ATP synthase subunit I of Halobacterium salinarum (strain ATCC 700922 / JCM 11081 / NRC-1) (Halobacterium halobium).